We begin with the raw amino-acid sequence, 669 residues long: DNA ligase (669 aa).

NAD(+) contacts are provided by residues 32-36 (DAEYD), 81-82 (SL), and Glu111. Lys113 acts as the N6-AMP-lysine intermediate in catalysis. NAD(+) is bound by residues Arg134, Glu171, Lys290, and Lys314. Residues Cys408, Cys411, Cys426, and Cys432 each contribute to the Zn(2+) site. The BRCT domain occupies 591–669 (EEALSLKGQT…EAELLAILGS (79 aa)).

Belongs to the NAD-dependent DNA ligase family. LigA subfamily. Mg(2+) is required as a cofactor. The cofactor is Mn(2+).

The enzyme catalyses NAD(+) + (deoxyribonucleotide)n-3'-hydroxyl + 5'-phospho-(deoxyribonucleotide)m = (deoxyribonucleotide)n+m + AMP + beta-nicotinamide D-nucleotide.. In terms of biological role, DNA ligase that catalyzes the formation of phosphodiester linkages between 5'-phosphoryl and 3'-hydroxyl groups in double-stranded DNA using NAD as a coenzyme and as the energy source for the reaction. It is essential for DNA replication and repair of damaged DNA. The polypeptide is DNA ligase (Shewanella loihica (strain ATCC BAA-1088 / PV-4)).